Consider the following 304-residue polypeptide: Oxygen-dependent coproporphyrinogen-III oxidase (304 aa).

Serine 94 contacts substrate. A divalent metal cation-binding residues include histidine 98 and histidine 108. The Proton donor role is filled by histidine 108. Residue 110–112 (NVR) participates in substrate binding. A divalent metal cation contacts are provided by histidine 147 and histidine 177. Residues 242 to 277 (YVEFNLVYDRGTLFGLQTGGRTESILMSMPPLVRWE) are important for dimerization. 260-262 (GGR) contributes to the substrate binding site.

The protein belongs to the aerobic coproporphyrinogen-III oxidase family. In terms of assembly, homodimer. The cofactor is a divalent metal cation.

The protein resides in the cytoplasm. It catalyses the reaction coproporphyrinogen III + O2 + 2 H(+) = protoporphyrinogen IX + 2 CO2 + 2 H2O. It participates in porphyrin-containing compound metabolism; protoporphyrin-IX biosynthesis; protoporphyrinogen-IX from coproporphyrinogen-III (O2 route): step 1/1. Its function is as follows. Involved in the heme biosynthesis. Catalyzes the aerobic oxidative decarboxylation of propionate groups of rings A and B of coproporphyrinogen-III to yield the vinyl groups in protoporphyrinogen-IX. In Shewanella piezotolerans (strain WP3 / JCM 13877), this protein is Oxygen-dependent coproporphyrinogen-III oxidase.